A 779-amino-acid chain; its full sequence is Cell division control protein 4 (779 aa).

The segment at 39 to 80 is disordered; the sequence is AGTHRNSSTAKTVETEDGEEDIDEYQRKRAAGSGESTPERSD. The Nuclear localization signal motif lies at 82–85; it reads KRVK. Residue S104 is modified to Phosphoserine. The F-box domain occupies 272-319; the sequence is RDLITSLPFEISLKIFNYLQFEDIINSLGVSQNWNKIIRKSTSLWKKL. WD repeat units follow at residues 380–408, 420–449, 461–493, 528–556, 568–598, 630–658, and 669–698; these read HMTSVITCLQFEDNYVITGADDKMIRVYD, GHDGGVWALKYAHGGILVSGSTDRTVRVWD, GHNSTVRCLDIVEYKNIKYIVTGSRDNTLHVWK, GHMASVRTVSGHGNIVVSGSYDNTLIVWD, GHTDRIYSTIYDHERKRCISASMDTTIRIWD, GHTALVGLLRLSDKFLVSAAADGSIRGWD, and HHTNLSAITTFYVSDNILVSGSENQFNIYN.

As to quaternary structure, interacts with DCD53 and SKP1. Component of the SCF(CDC4) complex containing CDC53, SKP1, RBX1 and CDC4. CDC34. Interacts with CDC6 and CIC1. Interacts with SIC1; the interaction involves a SIC1 double phosphorylated motif (degron). Homodimerizes; the dimerization increases SIC1 ubiquitination in vitro.

It is found in the nucleus. It participates in protein modification; protein ubiquitination. Substrate recognition component of a SCF (SKP1-CUL1-F-box protein) E3 ubiquitin-protein ligase complex which mediates the ubiquitination and subsequent proteasomal degradation of target proteins. Recognizes and binds to phosphorylated target proteins. Directs ubiquitination of the phosphorylated CDK inhibitor SIC1. Involved in the degradation of CDC6 together with CDC34/UBC3 and CDC53, and in restricting the degradation of FAR1 to the nucleus. Is essential for initiation of DNA replication and separation of the spindle pole bodies to form the poles of the mitotic spindle. It also plays a role in bud development, fusion of zygotic nuclei after conjugation and various aspects of sporulation. Required for HTA1-HTB1 locus transcription activation. Required for G1/S and G2/M transition. The sequence is that of Cell division control protein 4 (CDC4) from Saccharomyces cerevisiae (strain ATCC 204508 / S288c) (Baker's yeast).